A 418-amino-acid chain; its full sequence is Tyrosine--tRNA ligase (418 aa).

Tyr-38 provides a ligand contact to L-tyrosine. The 'HIGH' region signature appears at 43–52; it reads CTARSLHIGS. The L-tyrosine site is built by Tyr-175 and Gln-179. Positions 235–239 match the 'KMSKS' region motif; sequence KMGKT. Lys-238 contributes to the ATP binding site. The S4 RNA-binding domain occupies 348 to 413; it reads LSVVKLLQVS…CGKKRHLKVV (66 aa).

It belongs to the class-I aminoacyl-tRNA synthetase family. TyrS type 1 subfamily. Homodimer.

It is found in the cytoplasm. The catalysed reaction is tRNA(Tyr) + L-tyrosine + ATP = L-tyrosyl-tRNA(Tyr) + AMP + diphosphate + H(+). Its function is as follows. Catalyzes the attachment of tyrosine to tRNA(Tyr) in a two-step reaction: tyrosine is first activated by ATP to form Tyr-AMP and then transferred to the acceptor end of tRNA(Tyr). The protein is Tyrosine--tRNA ligase of Ehrlichia ruminantium (strain Gardel).